Here is an 880-residue protein sequence, read N- to C-terminus: Dynamin-like protein A (880 aa).

The disordered stretch occupies residues 1 to 124 (MSVFKKKDKS…QVELERKRRD (124 aa)). Basic and acidic residues predominate over residues 8–20 (DKSDDKKKKHDEE). Polar residues predominate over residues 22-31 (PQGTFQPASQ). A compositionally biased stretch (low complexity) spans 32 to 68 (STSNTNLNSLASSVNNGASVGSTNGSTPNNSNGSTPT). Residues 69–152 (YNHNNSAEEL…NEQVEISSLE (84 aa)) adopt a coiled-coil conformation. 2 stretches are compositionally biased toward basic and acidic residues: residues 77–94 (ELEK…KSEL) and 103–124 (KKKE…KRRD). Positions 191-478 (AVSHPEIVFV…VWKSYQDTIP (288 aa)) constitute a Dynamin-type G domain. The G1 motif stretch occupies residues 201-208 (GPRSSGKS). 201 to 208 (GPRSSGKS) contributes to the GTP binding site. The G2 motif stretch occupies residues 227–240 (IVGVGGSNANGCSK). The G3 motif stretch occupies residues 315-318 (DSPG). GTP contacts are provided by residues 315–319 (DSPGL) and 380–383 (TKFH). The G4 motif stretch occupies residues 380–383 (TKFH). Residues 413–416 (LPNH) form a G5 motif region. A coiled-coil region spans residues 479–509 (RILKHLRSKRQTAEATLNELQKQSSSLDSTK). Over residues 532 to 543 (TSEGNPSANGQT) the composition is skewed to polar residues. Residues 532–551 (TSEGNPSANGQTLDEEKSQQ) are disordered. Positions 824-861 (SNEQLEQLFEVQATREQLKQEEKKQQQILEKYSQIDEQ) form a coiled coil.

It belongs to the TRAFAC class dynamin-like GTPase superfamily. Dynamin/Fzo/YdjA family.

The protein resides in the cytoplasm. It localises to the cleavage furrow. The catalysed reaction is GTP + H2O = GDP + phosphate + H(+). Involved in cytokinesis. May hydrolyze GTP. The protein is Dynamin-like protein A (dlpA) of Dictyostelium discoideum (Social amoeba).